The primary structure comprises 358 residues: tRNA-specific 2-thiouridylase MnmA (358 aa).

ATP is bound by residues 8–15 (AMSGGVDS) and Met-35. Positions 95–97 (NPD) are interaction with target base in tRNA. Cys-100 acts as the Nucleophile in catalysis. Cys-100 and Cys-194 are disulfide-bonded. Gly-124 provides a ligand contact to ATP. Residues 144–146 (KDQ) are interaction with tRNA. The active-site Cysteine persulfide intermediate is Cys-194. An interaction with tRNA region spans residues 301–302 (RY).

Belongs to the MnmA/TRMU family.

The protein localises to the cytoplasm. It carries out the reaction S-sulfanyl-L-cysteinyl-[protein] + uridine(34) in tRNA + AH2 + ATP = 2-thiouridine(34) in tRNA + L-cysteinyl-[protein] + A + AMP + diphosphate + H(+). Catalyzes the 2-thiolation of uridine at the wobble position (U34) of tRNA, leading to the formation of s(2)U34. In Chlamydia trachomatis serovar D (strain ATCC VR-885 / DSM 19411 / UW-3/Cx), this protein is tRNA-specific 2-thiouridylase MnmA.